We begin with the raw amino-acid sequence, 443 residues long: Ribulose bisphosphate carboxylase large chain (443 aa).

The substrate site is built by Asn-89 and Thr-139. Lys-141 functions as the Proton acceptor in the catalytic mechanism. Lys-143 provides a ligand contact to substrate. Residues Lys-167, Asp-169, and Glu-170 each coordinate Mg(2+). Lys-167 carries the N6-carboxylysine modification. His-260 acts as the Proton acceptor in catalysis. 3 residues coordinate substrate: Arg-261, His-293, and Ser-345.

It belongs to the RuBisCO large chain family. Type I subfamily. As to quaternary structure, heterohexadecamer of 8 large chains and 8 small chains; disulfide-linked. The disulfide link is formed within the large subunit homodimers. Mg(2+) is required as a cofactor. The disulfide bond which can form in the large chain dimeric partners within the hexadecamer appears to be associated with oxidative stress and protein turnover.

It localises to the plastid. The protein resides in the chloroplast. The catalysed reaction is 2 (2R)-3-phosphoglycerate + 2 H(+) = D-ribulose 1,5-bisphosphate + CO2 + H2O. It catalyses the reaction D-ribulose 1,5-bisphosphate + O2 = 2-phosphoglycolate + (2R)-3-phosphoglycerate + 2 H(+). In terms of biological role, ruBisCO catalyzes two reactions: the carboxylation of D-ribulose 1,5-bisphosphate, the primary event in carbon dioxide fixation, as well as the oxidative fragmentation of the pentose substrate in the photorespiration process. Both reactions occur simultaneously and in competition at the same active site. This chain is Ribulose bisphosphate carboxylase large chain, found in Antirrhinum majus (Garden snapdragon).